Consider the following 117-residue polypeptide: Large ribosomal subunit protein bL20c (117 aa).

The protein belongs to the bacterial ribosomal protein bL20 family.

The protein resides in the plastid. The protein localises to the chloroplast. Binds directly to 23S ribosomal RNA and is necessary for the in vitro assembly process of the 50S ribosomal subunit. It is not involved in the protein synthesizing functions of that subunit. The sequence is that of Large ribosomal subunit protein bL20c from Eucalyptus globulus subsp. globulus (Tasmanian blue gum).